The following is a 373-amino-acid chain: DNA replication and repair protein RecF (373 aa).

ATP is bound at residue Gly-30–Thr-37.

This sequence belongs to the RecF family.

Its subcellular location is the cytoplasm. Its function is as follows. The RecF protein is involved in DNA metabolism; it is required for DNA replication and normal SOS inducibility. RecF binds preferentially to single-stranded, linear DNA. It also seems to bind ATP. The polypeptide is DNA replication and repair protein RecF (Bacillus cytotoxicus (strain DSM 22905 / CIP 110041 / 391-98 / NVH 391-98)).